The sequence spans 262 residues: Ribosomal RNA small subunit methyltransferase A (262 aa).

Positions 11, 13, 38, 60, 85, and 105 each coordinate S-adenosyl-L-methionine.

It belongs to the class I-like SAM-binding methyltransferase superfamily. rRNA adenine N(6)-methyltransferase family. RsmA subfamily.

Its subcellular location is the cytoplasm. The enzyme catalyses adenosine(1518)/adenosine(1519) in 16S rRNA + 4 S-adenosyl-L-methionine = N(6)-dimethyladenosine(1518)/N(6)-dimethyladenosine(1519) in 16S rRNA + 4 S-adenosyl-L-homocysteine + 4 H(+). Specifically dimethylates two adjacent adenosines (A1518 and A1519) in the loop of a conserved hairpin near the 3'-end of 16S rRNA in the 30S particle. May play a critical role in biogenesis of 30S subunits. The chain is Ribosomal RNA small subunit methyltransferase A from Neorickettsia sennetsu (strain ATCC VR-367 / Miyayama) (Ehrlichia sennetsu).